The following is a 600-amino-acid chain: 1-deoxy-D-xylulose-5-phosphate synthase (600 aa).

Thiamine diphosphate-binding positions include histidine 57 and 98 to 100; that span reads GHA. Residue aspartate 125 coordinates Mg(2+). Residues 126–127, asparagine 155, tyrosine 264, and glutamate 343 contribute to the thiamine diphosphate site; that span reads AS. A Mg(2+)-binding site is contributed by asparagine 155.

The protein belongs to the transketolase family. DXPS subfamily. In terms of assembly, homodimer. It depends on Mg(2+) as a cofactor. Thiamine diphosphate is required as a cofactor.

The enzyme catalyses D-glyceraldehyde 3-phosphate + pyruvate + H(+) = 1-deoxy-D-xylulose 5-phosphate + CO2. It participates in metabolic intermediate biosynthesis; 1-deoxy-D-xylulose 5-phosphate biosynthesis; 1-deoxy-D-xylulose 5-phosphate from D-glyceraldehyde 3-phosphate and pyruvate: step 1/1. Catalyzes the acyloin condensation reaction between C atoms 2 and 3 of pyruvate and glyceraldehyde 3-phosphate to yield 1-deoxy-D-xylulose-5-phosphate (DXP). The chain is 1-deoxy-D-xylulose-5-phosphate synthase from Fusobacterium nucleatum subsp. nucleatum (strain ATCC 25586 / DSM 15643 / BCRC 10681 / CIP 101130 / JCM 8532 / KCTC 2640 / LMG 13131 / VPI 4355).